Reading from the N-terminus, the 356-residue chain is Protein HEXIM1 (356 aa).

2 stretches are compositionally biased toward basic and acidic residues: residues 1-11 and 24-47; these read MAEPLLSEHQH and VHEE…DSRW. Positions 1–160 are disordered; the sequence is MAEPLLSEHQ…RRRPSKKKRH (160 aa). A compositionally biased stretch (polar residues) spans 48-58; that stretch reads QSRASLQSGSR. Residues 84–93 show a composition bias toward basic and acidic residues; the sequence is CLEKGEKGQN. Residues Ser-98 and Ser-103 each carry the phosphoserine modification. A compositionally biased stretch (basic residues) spans 145-160; sequence LGKKKHRRRPSKKKRH. Positions 147–174 are basic region; mediates nuclear localization and interaction with 7SK snRNA and NR3C1; the sequence is KKKHRRRPSKKKRHWKPYYKLTWEEKKK. Residues 199–202 form an interaction with P-TEFb region; sequence PYNT. Residues 207–247 are autoinhibitory acidic region; in absence of 7SK snRNA interacts with the basic region preventing interaction with P-TEFb and modulating subcellular localization; sequence MDDHDQEEPDLKTGLYPKRAAAKSDDTSDEDFVEEAGEEDG. The disordered stretch occupies residues 209 to 259; sequence DHDQEEPDLKTGLYPKRAAAKSDDTSDEDFVEEAGEEDGGSDGMGGDGSEF. Ser-230 is subject to Phosphoserine. Position 233 is a phosphothreonine (Thr-233). The segment covering 233 to 248 has biased composition (acidic residues); the sequence is TSDEDFVEEAGEEDGG. Phosphoserine is present on residues Ser-234, Ser-249, and Ser-257. Positions 280–346 form a coiled coil; sequence SKQELIKEYL…LTENELHRQQ (67 aa). The tract at residues 283–311 is mediates interaction with CCNT1; that stretch reads ELIKEYLELEKCLSRKEDENNRLRLESKR. Residues 307-352 form a required for inhibition of ESR1-dependent transcription region; sequence LESKRLGGVDARVRELELELDRLRAENRQLLTENELHRQQERAPPS. The interval 337-356 is disordered; that stretch reads LTENELHRQQERAPPSKFGD.

This sequence belongs to the HEXIM family. As to quaternary structure, homooligomer and heterooligomer with HEXIM2; probably dimeric. Core component of the 7SK RNP complex, at least composed of 7SK RNA, LARP7, MEPCE, HEXIM1 (or HEXIM2) and P-TEFb (composed of CDK9 and CCNT1/cyclin-T1). Interacts with the N-CoR complex through NCOR1. Interacts with ESR1 and NR3C1. May interact with NF-kappa-B through RELA. Interacts with CCNT2; mediates formation of a tripartite complex with KPNA2. Part of the HDP-RNP complex composed of at least HEXIM1, PRKDC, XRCC5, XRCC6, paraspeckle proteins (SFPQ, NONO, PSPC1, RBM14, and MATR3) and NEAT1 non-coding RNA.

It is found in the nucleus. Its subcellular location is the cytoplasm. In terms of biological role, transcriptional regulator which functions as a general RNA polymerase II transcription inhibitor. Core component of the 7SK RNP complex: in cooperation with 7SK snRNA sequesters P-TEFb in a large inactive 7SK snRNP complex preventing RNA polymerase II phosphorylation and subsequent transcriptional elongation. May also regulate NF-kappa-B, ESR1, NR3C1 and CIITA-dependent transcriptional activity. Plays a role in the regulation of DNA virus-mediated innate immune response by assembling into the HDP-RNP complex, a complex that serves as a platform for IRF3 phosphorylation and subsequent innate immune response activation through the cGAS-STING pathway. The sequence is that of Protein HEXIM1 (Hexim1) from Rattus norvegicus (Rat).